Here is a 331-residue protein sequence, read N- to C-terminus: Malate dehydrogenase (331 aa).

14–20 is an NAD(+) binding site; that stretch reads GAAGSIG. Arg-95 and Arg-101 together coordinate substrate. NAD(+) contacts are provided by residues Asn-108, Gln-115, and 132-134; that span reads VGN. Substrate is bound by residues Asn-134 and Arg-165. His-190 acts as the Proton acceptor in catalysis.

The protein belongs to the LDH/MDH superfamily. MDH type 2 family.

The catalysed reaction is (S)-malate + NAD(+) = oxaloacetate + NADH + H(+). In terms of biological role, catalyzes the reversible oxidation of malate to oxaloacetate. The sequence is that of Malate dehydrogenase from Rhodococcus opacus (strain B4).